Consider the following 109-residue polypeptide: Oncomodulin (109 aa).

An N-acetylserine modification is found at S2. EF-hand domains lie at 39–74 (MSAS…FQSD) and 78–109 (LTES…MVHS). Ca(2+) is bound by residues D52, D54, S56, Y58, E63, D91, D93, D95, K97, and E102. The disordered stretch occupies residues 82–109 (ETKSLMDAADNDGDGKIGADEFQEMVHS). Basic and acidic residues predominate over residues 94–109 (GDGKIGADEFQEMVHS).

It belongs to the parvalbumin family. As to expression, found in tumor tissues and not detected in normal tissues.

Its function is as follows. Has some calmodulin-like activity with respect to enzyme activation and growth regulation. Binds two calcium ions. The chain is Oncomodulin (Ocm) from Mus musculus (Mouse).